Here is a 267-residue protein sequence, read N- to C-terminus: Small ribosomal subunit protein uS2 (267 aa).

Residues 233–250 are compositionally biased toward basic and acidic residues; sequence RAESDKAETDKVEVEGKG. The segment at 233–267 is disordered; the sequence is RAESDKAETDKVEVEGKGEAPAAEAAEVVESADKA. A compositionally biased stretch (low complexity) spans 251–261; it reads EAPAAEAAEVV.

It belongs to the universal ribosomal protein uS2 family.

This Syntrophotalea carbinolica (strain DSM 2380 / NBRC 103641 / GraBd1) (Pelobacter carbinolicus) protein is Small ribosomal subunit protein uS2.